The primary structure comprises 955 residues: 2-oxoglutarate dehydrogenase E1 component (955 aa).

It belongs to the alpha-ketoglutarate dehydrogenase family. In terms of assembly, homodimer. Part of the 2-oxoglutarate dehydrogenase (OGDH) complex composed of E1 (2-oxoglutarate dehydrogenase), E2 (dihydrolipoamide succinyltransferase) and E3 (dihydrolipoamide dehydrogenase); the complex contains multiple copies of the three enzymatic components (E1, E2 and E3). Requires thiamine diphosphate as cofactor.

It catalyses the reaction N(6)-[(R)-lipoyl]-L-lysyl-[protein] + 2-oxoglutarate + H(+) = N(6)-[(R)-S(8)-succinyldihydrolipoyl]-L-lysyl-[protein] + CO2. Functionally, E1 component of the 2-oxoglutarate dehydrogenase (OGDH) complex which catalyzes the decarboxylation of 2-oxoglutarate, the first step in the conversion of 2-oxoglutarate to succinyl-CoA and CO(2). This is 2-oxoglutarate dehydrogenase E1 component from Bacillus anthracis (strain A0248).